A 372-amino-acid chain; its full sequence is tRNA-specific 2-thiouridylase MnmA (372 aa).

Residues 9-16 and Met35 each bind ATP; that span reads GLSGGVDS. The tract at residues 95–97 is interaction with target base in tRNA; the sequence is NPD. Cys100 (nucleophile) is an active-site residue. Cysteines 100 and 198 form a disulfide. Position 124 (Gly124) interacts with ATP. Residues 148 to 150 are interaction with tRNA; it reads KDQ. Catalysis depends on Cys198, which acts as the Cysteine persulfide intermediate. The interaction with tRNA stretch occupies residues 317–318; that stretch reads RY.

It belongs to the MnmA/TRMU family.

The protein localises to the cytoplasm. It catalyses the reaction S-sulfanyl-L-cysteinyl-[protein] + uridine(34) in tRNA + AH2 + ATP = 2-thiouridine(34) in tRNA + L-cysteinyl-[protein] + A + AMP + diphosphate + H(+). Catalyzes the 2-thiolation of uridine at the wobble position (U34) of tRNA, leading to the formation of s(2)U34. The sequence is that of tRNA-specific 2-thiouridylase MnmA from Delftia acidovorans (strain DSM 14801 / SPH-1).